The following is a 259-amino-acid chain: Phospholipase YtpA (259 aa).

Serine 88 acts as the Nucleophile in catalysis. Residues aspartate 206 and histidine 236 each act as charge relay system in the active site.

This sequence belongs to the AB hydrolase superfamily.

Its pathway is antibiotic biosynthesis; bacilysocin biosynthesis. In terms of biological role, phospholipase involved in the biosynthesis of the antibiotic bacilysocin. It probably catalyzes the hydrolysis of the 2-sn-acyl moiety of phosphatidylglycerol to produce bacilysocin (lysophosphatidylglycerol). Is also able to catalyze the hydrolysis reaction of one acyl bond in phosphatidylcholine in vitro (actual cleavage point is unknown), resulting in lysophosphatidylcholine. In Bacillus subtilis (strain 168), this protein is Phospholipase YtpA (ytpA).